Here is a 553-residue protein sequence, read N- to C-terminus: General alpha-glucoside permease (553 aa).

Residues 1–21 (MSVDENQLENGQLLSSENEAS) are compositionally biased toward polar residues. A disordered region spans residues 1–26 (MSVDENQLENGQLLSSENEASSPFKE). Residues 1 to 33 (MSVDENQLENGQLLSSENEASSPFKESIPSRSS) are Cytoplasmic-facing. The chain crosses the membrane as a helical span at residues 34–54 (LYLIALTVSLLGVQLTWSVEL). Residues 55-72 (GYGTPYLFSLGLRKEWTS) are Extracellular-facing. The chain crosses the membrane as a helical span at residues 73–93 (IIWIAGPLTGILIQPIAGILS). Residues 94-111 (DRVNSRIGRRRPFMLCAS) lie on the Cytoplasmic side of the membrane. A helical transmembrane segment spans residues 112 to 132 (LLGTFSLFLMGWAPDICLFIF). Residues 133-140 (SNEVLMKR) are Extracellular-facing. A helical transmembrane segment spans residues 141-161 (VTIVLATISIYLLDVAVNVVM). Residues 162-186 (ASTRSLIVDSVRSDQQHEANSWAGR) are Cytoplasmic-facing. Residues 187–207 (MIGVGNVLGYLLGYLPLYRIF) traverse the membrane as a helical segment. At 208-216 (SFLNFTQLQ) the chain is on the extracellular side. Residues 217–237 (VFCVLASISLVLTVTITTIFV) form a helical membrane-spanning segment. Residues 238–280 (SERRFPPVEHEKSVAGEIFEFFTTMRQSITALPFTLKRICFVQ) lie on the Cytoplasmic side of the membrane. Residues 281–301 (FFAYFGWFPFLFYITTYVGIL) traverse the membrane as a helical segment. Residues 302–322 (YLRHAPKGHEEDWDMATRQGS) are Extracellular-facing. Residues 323-343 (FALLLFAIISLAANTALPLLL) traverse the membrane as a helical segment. Over 344 to 424 (EDTEDDEEDE…SKVQIKGLTL (81 aa)) the chain is Cytoplasmic. The disordered stretch occupies residues 368 to 399 (NDLGNIRTGTNTPRLGNLSETTSFRSENEPSR). The segment covering 374–392 (RTGTNTPRLGNLSETTSFR) has biased composition (polar residues). Residues 425-445 (PILWLSSHVLFGVCMLSTIFL) traverse the membrane as a helical segment. The Extracellular portion of the chain corresponds to 446-452 (QTSWQAQ). A helical transmembrane segment spans residues 453-473 (AMVAICGLSWACTLWIPYSLF). Topologically, residues 474 to 494 (SSEIGKLGLRESSGKMIGVHN) are cytoplasmic. Residues 495-515 (VFISAPQVLSTIIATIVFIQS) traverse the membrane as a helical segment. Residues 516-521 (EGSHRD) are Extracellular-facing. Residues 522-542 (IADNSIAWVLRIGGISAFLAA) traverse the membrane as a helical segment. Over 543–553 (YQCRHLLPINF) the chain is Cytoplasmic.

The protein belongs to the glycoside-pentoside-hexuronide (GPH) cation symporter transporter (TC 2.A.2.4) family.

The protein resides in the membrane. In terms of biological role, responsible for the transport of maltose and sucrose into the cell, with the concomitant uptake of protons (symport system). The protein is General alpha-glucoside permease (sut1) of Schizosaccharomyces pombe (strain 972 / ATCC 24843) (Fission yeast).